A 354-amino-acid polypeptide reads, in one-letter code: 4-hydroxy-2-oxovalerate aldolase 6 (354 aa).

The Pyruvate carboxyltransferase domain occupies 10–262; it reads VRIVDTTLRD…ATGLDVMATL (253 aa). 18–19 contributes to the substrate binding site; it reads RD. Aspartate 19 provides a ligand contact to Mn(2+). Histidine 22 serves as the catalytic Proton acceptor. Residues serine 172 and histidine 201 each coordinate substrate. Residues histidine 201 and histidine 203 each contribute to the Mn(2+) site. Substrate is bound at residue tyrosine 292.

This sequence belongs to the 4-hydroxy-2-oxovalerate aldolase family.

The catalysed reaction is (S)-4-hydroxy-2-oxopentanoate = acetaldehyde + pyruvate. In Rhodococcus jostii (strain RHA1), this protein is 4-hydroxy-2-oxovalerate aldolase 6.